Reading from the N-terminus, the 117-residue chain is Iron-sulfur cluster insertion protein ErpA (117 aa).

Iron-sulfur cluster contacts are provided by Cys-45, Cys-109, and Cys-111.

Belongs to the HesB/IscA family. As to quaternary structure, homodimer. It depends on iron-sulfur cluster as a cofactor.

Functionally, required for insertion of 4Fe-4S clusters for at least IspG. The protein is Iron-sulfur cluster insertion protein ErpA of Chromohalobacter salexigens (strain ATCC BAA-138 / DSM 3043 / CIP 106854 / NCIMB 13768 / 1H11).